A 166-amino-acid polypeptide reads, in one-letter code: Probable RNA-binding protein EIF1AD (166 aa).

An S1-like domain is found at 5–89 (TKRKHVVKEV…VKAEISFVLC (85 aa)). Residues 6–12 (KRKHVVK) carry the Nuclear localization signal motif. A Phosphothreonine modification is found at Thr33. The short motif at 56–65 (KYRKNIWIKR) is the Nuclear localization signal element. Residues 114–166 (NNNRNRQTQPELPAEPQLSGEESSSEDDSDLFVNTNRRQYRESEEESEEEEAA) form a disordered region. Ser132, Ser136, Ser137, Ser138, Ser156, and Ser160 each carry phosphoserine. Residues 156 to 166 (SEEESEEEEAA) are compositionally biased toward acidic residues.

The protein belongs to the EIF1AD family. As to quaternary structure, interacts with GAPDH and STAT1.

Its subcellular location is the nucleus. In terms of biological role, plays a role into cellular response to oxidative stress. Decreases cell proliferation. This Pongo abelii (Sumatran orangutan) protein is Probable RNA-binding protein EIF1AD (EIF1AD).